The following is a 199-amino-acid chain: NADH-quinone oxidoreductase subunit C (199 aa).

It belongs to the complex I 30 kDa subunit family. NDH-1 is composed of 14 different subunits. Subunits NuoB, C, D, E, F, and G constitute the peripheral sector of the complex.

It is found in the cell inner membrane. It catalyses the reaction a quinone + NADH + 5 H(+)(in) = a quinol + NAD(+) + 4 H(+)(out). In terms of biological role, NDH-1 shuttles electrons from NADH, via FMN and iron-sulfur (Fe-S) centers, to quinones in the respiratory chain. The immediate electron acceptor for the enzyme in this species is believed to be ubiquinone. Couples the redox reaction to proton translocation (for every two electrons transferred, four hydrogen ions are translocated across the cytoplasmic membrane), and thus conserves the redox energy in a proton gradient. The protein is NADH-quinone oxidoreductase subunit C of Leptothrix cholodnii (strain ATCC 51168 / LMG 8142 / SP-6) (Leptothrix discophora (strain SP-6)).